Consider the following 31-residue polypeptide: Potassium channel toxin alpha-KTx 5.5 (31 aa).

3 disulfides stabilise this stretch: C3-C21, C8-C26, and C12-C28. Residues 6 to 9 (RRCE) form a [R/K]XCQ motif region. Histidine amide is present on H31.

Expressed by the venom gland.

Its subcellular location is the secreted. Its function is as follows. Blocks small conductance calcium-activated potassium channels. This chain is Potassium channel toxin alpha-KTx 5.5, found in Hottentotta tamulus (Eastern Indian scorpion).